Reading from the N-terminus, the 277-residue chain is Thymidylate synthase (277 aa).

Arginine 21 contributes to the dUMP binding site. Residue histidine 51 participates in (6R)-5,10-methylene-5,6,7,8-tetrahydrofolate binding. 126 to 127 (RR) contacts dUMP. Cysteine 159 (nucleophile) is an active-site residue. Residues 179–182 (RSSD), asparagine 190, and 220–222 (HAY) contribute to the dUMP site. Position 182 (aspartate 182) interacts with (6R)-5,10-methylene-5,6,7,8-tetrahydrofolate. Alanine 276 lines the (6R)-5,10-methylene-5,6,7,8-tetrahydrofolate pocket.

This sequence belongs to the thymidylate synthase family. Bacterial-type ThyA subfamily. In terms of assembly, homodimer.

Its subcellular location is the cytoplasm. The enzyme catalyses dUMP + (6R)-5,10-methylene-5,6,7,8-tetrahydrofolate = 7,8-dihydrofolate + dTMP. Its pathway is pyrimidine metabolism; dTTP biosynthesis. Functionally, catalyzes the reductive methylation of 2'-deoxyuridine-5'-monophosphate (dUMP) to 2'-deoxythymidine-5'-monophosphate (dTMP) while utilizing 5,10-methylenetetrahydrofolate (mTHF) as the methyl donor and reductant in the reaction, yielding dihydrofolate (DHF) as a by-product. This enzymatic reaction provides an intracellular de novo source of dTMP, an essential precursor for DNA biosynthesis. This Pseudomonas fluorescens (strain SBW25) protein is Thymidylate synthase.